Consider the following 401-residue polypeptide: Multidrug resistance protein MdtH (401 aa).

11 helical membrane passes run 13–33 (YFLL…FPLI), 34–54 (SIRF…ALGL), 99–116 (PWIL…GTLF), 139–159 (LLMM…SWLL), 165–185 (FVCW…AWLL), 214–234 (VLTL…LPIV), 243–263 (AAVK…LYPL), 277–297 (LMAG…ITHL), 299–319 (TLFM…PARE), 340–360 (LGLA…YDTG), and 368–388 (LPWF…YWQF).

This sequence belongs to the major facilitator superfamily. DHA1 family. MdtH (TC 2.A.1.2.21) subfamily.

The protein localises to the cell inner membrane. This Yersinia pseudotuberculosis serotype O:1b (strain IP 31758) protein is Multidrug resistance protein MdtH.